We begin with the raw amino-acid sequence, 602 residues long: MALSCSTVRPRRRGSALRSKMELLSRAEQEMSLAALKQHDPYITSIADLTGQVALYTFCPKANQWEKTDIEGTLFVYRRSASPYHGFTIVNRLNMHNLVEPVNKDLEFQLHEPFLLYRNASLSIYSIWFYDKNDCHRIAKLMADVVEEETRRSQQAARDKQSPSQANGCSDQRPIDILEMLSRAKDEYERNQMGGSNISSPGLQPSTQLSNLGSTETLEETPSGSQDKSAPSGHKHLTVEELFGTSLPKEQPTAMGLESEDTDKLLGDASQKEPSSFLPFPFEQSGGAPQSENLGIHSAAHHTVQPEVSTPVLITPASIAQSGDKHPPSYTLPLSPVLSPTLPAEAPTTQVPHLPRNSTMIQAVKTTPRQKSPLLNQPVPELSHSSLVASQSPFRAPVSLANPAGTALPSVDLLQKLRLTPQHDQIQAQPLGKGTMAPSFSSAAGQLATPESFIEPSSKTAAARAAVSASLSNMVLAPTLQSMQQNQDPEVFSQPKVLPSAIPIAGSPLVPATTTAVSSVLLSPSVFQQTVPRAADLERKASSPSPLTVGTAESQRKPSIILSKSQLQDTLIHLIKNDSSFLSTLHAVYLQVLTKNKDNHNL.

Position 82 is a phosphoserine (S82). Basic and acidic residues predominate over residues 152-161 (RSQQAARDKQ). Disordered regions lie at residues 152–174 (RSQQ…DQRP), 191–234 (NQMG…PSGH), and 267–291 (GDAS…APQS). 3 positions are modified to phosphoserine: S162, S199, and S200. Residues 193 to 229 (MGGSNISSPGLQPSTQLSNLGSTETLEETPSGSQDKS) show a composition bias toward polar residues. Phosphoserine is present on residues S335 and S339. At T367 the chain carries Phosphothreonine. Residue S372 is modified to Phosphoserine. Asymmetric dimethylarginine is present on R395. The residue at position 420 (T420) is a Phosphothreonine. Phosphoserine occurs at positions 441, 542, 543, and 545. Phosphothreonine is present on residues T548 and T551.

It belongs to the DCP1 family. In terms of assembly, forms a complex with EDC3, DCP2, DDX6 and EDC4/HEDLS, within this complex directly interacts with EDC3. Part of a cytoplasmic complex containing proteins involved in mRNA decay, including XRN1 and LSM1. Interacts with DCP1B. Interacts with DCP2. Interacts with DDX17 in an RNA-independent manner. Interacts with PNRC2. Interacts with SMAD4. Interacts with UPF1. Interacts with ZC3HAV1. Interacts with ZFP36L1. Interacts with NBDY. Interacts with DHX34; the interaction is RNA-independent. As to expression, ubiquitous, with highest expression in the spleen and testis (at protein level).

It is found in the cytoplasm. Its subcellular location is the P-body. The protein localises to the nucleus. The catalysed reaction is a 5'-end (N(7)-methyl 5'-triphosphoguanosine)-ribonucleoside in mRNA + H2O = N(7)-methyl-GDP + a 5'-end phospho-ribonucleoside in mRNA + 2 H(+). Necessary for the degradation of mRNAs, both in normal mRNA turnover and in nonsense-mediated mRNA decay. Removes the 7-methyl guanine cap structure from mRNA molecules, yielding a 5'-phosphorylated mRNA fragment and 7m-GDP. Contributes to the transactivation of target genes after stimulation by TGFB1. Essential for embryonic development. This chain is mRNA-decapping enzyme 1A (Dcp1a), found in Mus musculus (Mouse).